The primary structure comprises 741 residues: Mitofusin-1 (741 aa).

The Cytoplasmic segment spans residues 1-584 (MAEPVSPLKH…ASQEELMITL (584 aa)). The segment at 9-73 (KHFVLAKKAI…LSIIGEVLSR (65 aa)) is part of a helix bundle domain, formed by helices from N-terminal and C-terminal regions. In terms of domain architecture, Dynamin-type G spans 72–321 (SRRHMKVAFF…ARLQEFQNFE (250 aa)). A G1 motif region spans residues 82–89 (GRTSSGKS). 85-90 (SSGKSS) lines the GTP pocket. The tract at residues 108 to 109 (IT) is G2 motif. A G3 motif region spans residues 178–181 (DSPG). 237–240 (NRWD) provides a ligand contact to GTP. Residues 237–240 (NRWD) are G4 motif. A region of interest (G5 motif) is located at residue Glu266. Residues Ser284 and Lys286 each contribute to the GTP site. A part of a helix bundle domain, formed by helices from N-terminal and C-terminal regions region spans residues 338–364 (EQHTIRAKQILATVKNIMDSVNLAAED). Residues 371-408 (EEREDQIDRLDFIRNQMNLLTLDVKKKIKEVTEEVANK) adopt a coiled-coil conformation. Residues 585-605 (VTGLASVTSRTSMGIIIVGGV) traverse the membrane as a helical segment. Topologically, residues 606–608 (IWK) are mitochondrial intermembrane. Residues 609–629 (TIGWKLLSVSLTMYGALYLYE) traverse the membrane as a helical segment. Residues 630 to 741 (RLSWTTHAKE…QFLPSSNEES (112 aa)) lie on the Cytoplasmic side of the membrane. A coiled-coil region spans residues 679-734 (RLCQQVDITQKQLEEEIARLPKEIDQLEKIQNNSKLLRNKAVQLENELENFTKQFL). Residues 703–734 (DQLEKIQNNSKLLRNKAVQLENELENFTKQFL) form a part of a helix bundle domain, formed by helices from N-terminal and C-terminal regions region.

It belongs to the TRAFAC class dynamin-like GTPase superfamily. Dynamin/Fzo/YdjA family. Mitofusin subfamily. As to quaternary structure, homodimer, also in the absence of bound GTP. Forms higher oligomers in the presence of a transition state GTP analog. Forms homomultimers and heteromultimers with MFN2. Oligomerization is essential for mitochondrion fusion. Component of a high molecular weight multiprotein complex. Interacts with VAT1. Interacts with THG1L; THG1L probably functions as a guanyl-nucleotide exchange factor/GEF, activating MFN1. Ubiquitinated by non-degradative ubiquitin by PRKN. Deubiquitination by USP30 inhibits mitochondrial fusion. Ubiquitinated by MARCHF5. When mitochondria are depolarized and dysfunctional, it is ubiquitinated by a SCF (SKP1-CUL1-F-box protein) E3 ubiquitin-protein ligase complex that contains FBXO7 and PRKN. In terms of tissue distribution, detected in kidney and heart (at protein level). Ubiquitous. Expressed at slightly higher level in kidney and heart. Isoform 2 may be overexpressed in some tumors, such as lung cancers.

The protein localises to the mitochondrion outer membrane. It localises to the cytoplasm. It catalyses the reaction GTP + H2O = GDP + phosphate + H(+). In terms of biological role, mitochondrial outer membrane GTPase that mediates mitochondrial clustering and fusion. Membrane clustering requires GTPase activity. It may involve a major rearrangement of the coiled coil domains. Mitochondria are highly dynamic organelles, and their morphology is determined by the equilibrium between mitochondrial fusion and fission events. Overexpression induces the formation of mitochondrial networks (in vitro). Has low GTPase activity. The sequence is that of Mitofusin-1 (MFN1) from Homo sapiens (Human).